Here is a 212-residue protein sequence, read N- to C-terminus: Thymidine kinase (212 aa).

ATP contacts are provided by residues 11–18 (SPMNAGKT), 43–45 (DTR), and 86–89 (DEAQ). The active-site Proton acceptor is E87. Residue F119 participates in substrate binding. C144, C147, C183, and C186 together coordinate Zn(2+).

This sequence belongs to the thymidine kinase family.

The catalysed reaction is thymidine + ATP = dTMP + ADP + H(+). The chain is Thymidine kinase (TK) from Encephalitozoon cuniculi (strain GB-M1) (Microsporidian parasite).